The primary structure comprises 387 residues: 3-ketoacyl-CoA thiolase (387 aa).

The Acyl-thioester intermediate role is filled by Cys91. Residues His343 and Cys373 each act as proton acceptor in the active site.

This sequence belongs to the thiolase-like superfamily. Thiolase family. In terms of assembly, heterotetramer of two alpha chains (FadB) and two beta chains (FadA).

The protein resides in the cytoplasm. The catalysed reaction is an acyl-CoA + acetyl-CoA = a 3-oxoacyl-CoA + CoA. The protein operates within lipid metabolism; fatty acid beta-oxidation. Catalyzes the final step of fatty acid oxidation in which acetyl-CoA is released and the CoA ester of a fatty acid two carbons shorter is formed. The sequence is that of 3-ketoacyl-CoA thiolase from Shewanella sp. (strain MR-7).